The primary structure comprises 543 residues: MAAKDVKFSGDARERMLRGVDILANAVKVTLGPKGRNVVIEKSFGAPRITKDGVTVAKEIELEDKFENMGAQMVREVASKTNDLAGDGTTTATVLAQAIVREGAKAVAAGMNPMDLKRGIDIAVAAVIKDIEKRAKPVASSSEVAQVGTISANGDAAIGKMIAQAMQKVGNEGVITVEENKSLDTEVDIVEGMKFDRGYLSPYFVTNAEKMTAELEDAYILLHEKKLSGLQAMLPVLEAVVQSGKPLVIIAEDVEGEALATLVVNRLRGGLKVAAVKAPGFGDRRKAMLEDLAILTGGQLISEELGIKLENVTVKMLGRAKKVVIDKENTTIVNGAGKKPDIEARVGQIKAQIEETTSDYDREKLQERLAKLAGGVAVIRVGGATEIEVKEKKDRVEDALNATRAAVQEGIVPGGGVALLRAKKAVGRLTNANDDVQAGINIVLKALEAPIRQISENAGVEGSIVVGKILENKSETFGFDAQNEDYVDMVEKGIIDPAKVVRTALQDASSVAGLLVTTEAMVAEAPKKDAPPAMPAGGGMGGF.

Residues Thr-30–Pro-33, Lys-51, Asp-87–Thr-91, Gly-415, and Asp-496 each bind ATP.

The protein belongs to the chaperonin (HSP60) family. Forms a cylinder of 14 subunits composed of two heptameric rings stacked back-to-back. Interacts with the co-chaperonin GroES.

It localises to the cytoplasm. The catalysed reaction is ATP + H2O + a folded polypeptide = ADP + phosphate + an unfolded polypeptide.. Together with its co-chaperonin GroES, plays an essential role in assisting protein folding. The GroEL-GroES system forms a nano-cage that allows encapsulation of the non-native substrate proteins and provides a physical environment optimized to promote and accelerate protein folding. In Bradyrhizobium diazoefficiens (strain JCM 10833 / BCRC 13528 / IAM 13628 / NBRC 14792 / USDA 110), this protein is Chaperonin GroEL 7.